Consider the following 55-residue polypeptide: MAKKSGSGLQSSAGLMRYYEADKNAIHIQPKTVLIAGALVGIAVIFLSAVNGFWP.

The Cytoplasmic segment spans residues 1–29; it reads MAKKSGSGLQSSAGLMRYYEADKNAIHIQ. Residues 30-49 traverse the membrane as a helical segment; the sequence is PKTVLIAGALVGIAVIFLSA. Residues 50-55 are Extracellular-facing; sequence VNGFWP.

Belongs to the SEC61-beta family. As to quaternary structure, component of the protein translocase complex. Heterotrimer consisting of alpha (SecY), beta (SecG) and gamma (SecE) subunits. Can form oligomers of the heterotrimer.

It localises to the cell membrane. In terms of biological role, involved in protein export. The function of the beta subunit is unknown, but it may be involved in stabilization of the trimeric complex. The protein is Preprotein translocase subunit SecG (secG) of Methanosarcina mazei (strain ATCC BAA-159 / DSM 3647 / Goe1 / Go1 / JCM 11833 / OCM 88) (Methanosarcina frisia).